Consider the following 434-residue polypeptide: Serine hydroxymethyltransferase (434 aa).

Residues leucine 133 and 137-139 (GHL) contribute to the (6S)-5,6,7,8-tetrahydrofolate site. Residue lysine 242 is modified to N6-(pyridoxal phosphate)lysine.

Belongs to the SHMT family. In terms of assembly, homodimer. The cofactor is pyridoxal 5'-phosphate.

It is found in the cytoplasm. It carries out the reaction (6R)-5,10-methylene-5,6,7,8-tetrahydrofolate + glycine + H2O = (6S)-5,6,7,8-tetrahydrofolate + L-serine. The protein operates within one-carbon metabolism; tetrahydrofolate interconversion. It functions in the pathway amino-acid biosynthesis; glycine biosynthesis; glycine from L-serine: step 1/1. Its function is as follows. Catalyzes the reversible interconversion of serine and glycine with tetrahydrofolate (THF) serving as the one-carbon carrier. This reaction serves as the major source of one-carbon groups required for the biosynthesis of purines, thymidylate, methionine, and other important biomolecules. Also exhibits THF-independent aldolase activity toward beta-hydroxyamino acids, producing glycine and aldehydes, via a retro-aldol mechanism. The chain is Serine hydroxymethyltransferase from Methylorubrum populi (strain ATCC BAA-705 / NCIMB 13946 / BJ001) (Methylobacterium populi).